Consider the following 1314-residue polypeptide: E3 ubiquitin-protein ligase RNF123 (1314 aa).

Residue Ala2 is modified to N-acetylalanine. Positions 74–254 constitute a B30.2/SPRY domain; the sequence is VDNEEEESQG…VAFNFGSRPL (181 aa). A Phosphoserine modification is found at Ser675. Arg683 carries the asymmetric dimethylarginine modification. An interaction with NFKB1 region spans residues 968–974; sequence WILVRLW. 8 residues coordinate Zn(2+): Cys1254, Cys1257, Cys1269, His1271, Cys1274, Cys1277, Cys1288, and Cys1291. The segment at 1254–1292 adopts an RING-type zinc-finger fold; sequence CPICYAHPISAVFQPCGHKSCKACINQHLMNNKDCFFCK.

In terms of assembly, component of the KPC complex composed of RNF123/KPC1 and UBAC1/KPC2. Interacts with UBAC1 and CDKN1B via its N-terminal domain. Interacts with RIGI (via N-terminus) and IFIH1 (via N-terminus). In terms of processing, ubiquitinated, leading to its degradation. Deubiquitinated by USP19, thereby stimulating CDKN1B ubiquitin-dependent degradation.

The protein localises to the cytoplasm. The catalysed reaction is S-ubiquitinyl-[E2 ubiquitin-conjugating enzyme]-L-cysteine + [acceptor protein]-L-lysine = [E2 ubiquitin-conjugating enzyme]-L-cysteine + N(6)-ubiquitinyl-[acceptor protein]-L-lysine.. Its pathway is protein modification; protein ubiquitination. Functionally, catalytic subunit of the KPC complex that acts as E3 ubiquitin-protein ligase. Promotes the ubiquitination and proteasome-mediated degradation of CDKN1B which is the cyclin-dependent kinase inhibitor at the G0-G1 transition of the cell cycle. Also acts as a key regulator of the NF-kappa-B signaling by promoting maturation of the NFKB1 component of NF-kappa-B: acts by catalyzing ubiquitination of the NFKB1 p105 precursor, leading to limited proteasomal degradation of NFKB1 p105 and generation of the active NFKB1 p50 subunit. Also functions as an inhibitor of innate antiviral signaling mediated by RIGI and IFIH1 independently of its E3 ligase activity. Interacts with the N-terminal CARD domains of RIGI and IFIH1 and competes with the downstream adapter MAVS. The sequence is that of E3 ubiquitin-protein ligase RNF123 from Homo sapiens (Human).